The primary structure comprises 386 residues: Cobalt-precorrin-5B C(1)-methyltransferase (386 aa).

The protein belongs to the CbiD family.

It catalyses the reaction Co-precorrin-5B + S-adenosyl-L-methionine = Co-precorrin-6A + S-adenosyl-L-homocysteine. Its pathway is cofactor biosynthesis; adenosylcobalamin biosynthesis; cob(II)yrinate a,c-diamide from sirohydrochlorin (anaerobic route): step 6/10. Functionally, catalyzes the methylation of C-1 in cobalt-precorrin-5B to form cobalt-precorrin-6A. The polypeptide is Cobalt-precorrin-5B C(1)-methyltransferase (Prochlorococcus marinus (strain MIT 9303)).